We begin with the raw amino-acid sequence, 243 residues long: Ubiquinone/menaquinone biosynthesis C-methyltransferase UbiE (243 aa).

S-adenosyl-L-methionine-binding positions include threonine 69, aspartate 90, and 116 to 117 (DA).

Belongs to the class I-like SAM-binding methyltransferase superfamily. MenG/UbiE family.

The enzyme catalyses a 2-demethylmenaquinol + S-adenosyl-L-methionine = a menaquinol + S-adenosyl-L-homocysteine + H(+). It carries out the reaction a 2-methoxy-6-(all-trans-polyprenyl)benzene-1,4-diol + S-adenosyl-L-methionine = a 5-methoxy-2-methyl-3-(all-trans-polyprenyl)benzene-1,4-diol + S-adenosyl-L-homocysteine + H(+). It participates in quinol/quinone metabolism; menaquinone biosynthesis; menaquinol from 1,4-dihydroxy-2-naphthoate: step 2/2. Its pathway is cofactor biosynthesis; ubiquinone biosynthesis. Its function is as follows. Methyltransferase required for the conversion of demethylmenaquinol (DMKH2) to menaquinol (MKH2) and the conversion of 2-polyprenyl-6-methoxy-1,4-benzoquinol (DDMQH2) to 2-polyprenyl-3-methyl-6-methoxy-1,4-benzoquinol (DMQH2). The sequence is that of Ubiquinone/menaquinone biosynthesis C-methyltransferase UbiE from Paraburkholderia phytofirmans (strain DSM 17436 / LMG 22146 / PsJN) (Burkholderia phytofirmans).